A 520-amino-acid chain; its full sequence is Ribonuclease Y 2 (520 aa).

The helical transmembrane segment at 7 to 23 threads the bilayer; that stretch reads VVLLLASIGVGYGLRAK. The KH domain occupies 206–269; it reads NHRSFIAENA…AVAMETMEMI (64 aa). Positions 332–425 constitute an HD domain; the sequence is ILEHSIETAK…VEAADAISGA (94 aa).

This sequence belongs to the RNase Y family.

It localises to the cell membrane. Functionally, endoribonuclease that initiates mRNA decay. The chain is Ribonuclease Y 2 from Pediococcus pentosaceus (strain ATCC 25745 / CCUG 21536 / LMG 10740 / 183-1w).